The following is a 161-amino-acid chain: Small ribosomal subunit protein uS9 (161 aa).

It belongs to the universal ribosomal protein uS9 family.

This chain is Small ribosomal subunit protein uS9, found in Rickettsia canadensis (strain McKiel).